A 481-amino-acid polypeptide reads, in one-letter code: Argininosuccinate lyase (481 aa).

Belongs to the lyase 1 family. Argininosuccinate lyase subfamily.

The protein resides in the cytoplasm. The enzyme catalyses 2-(N(omega)-L-arginino)succinate = fumarate + L-arginine. Its pathway is amino-acid biosynthesis; L-arginine biosynthesis; L-arginine from L-ornithine and carbamoyl phosphate: step 3/3. The sequence is that of Argininosuccinate lyase from Methanococcus maripaludis (strain C7 / ATCC BAA-1331).